The following is a 506-amino-acid chain: MSSGLSLERACAVALGIVASASLVAAGPCDIYSSGGTPCVAAHSTTRALYSAYTGALYQVKRGSDGSTTDIAPLSAGGVADAATQDSFCANTTCLITIIYDQSGRGNHLTQAPPGGFNGPESNGYDNLASAVGAPVTLNGKKAYGVFMSPGTGYRNNAASGTATGDEAEGMYAVLDGTHYNSACCFDYGNAEVSNTDTGNGHMEAIYYGDNTVWGSGAGSGPWIMADLENGLFSGLSSKNNAGDPSISYRFVTAVVKGEANQWSIRGANAASGSLSTYYSGARPSASGYNPMSKEGAIILGIGGDNSNGAQGTFYEGVMTSGYPSDATENSVQADIVAAKYAIASLTSGPALTVGSSISLQVTTAGYTTRYLAHDGSTVNTQVVSSSSTTALKQQASWTVRTGLANSACFSFESVDTPGSYIRHYNFALLLNANDGTKQFYEDATFCPQAGLNGQGNSIRSWSYPTRYFRHYENVLYVASNGGVQTFDATTSFNDDVSWVVSTGFA.

Positions 1 to 26 (MSSGLSLERACAVALGIVASASLVAA) are cleaved as a signal peptide. A catalytic region spans residues 27–343 (GPCDIYSSGG…ADIVAAKYAI (317 aa)). Intrachain disulfides connect C29-C39, C89-C94, and C184-C185. A glycan (N-linked (GlcNAc...) asparagine) is linked at N91. D227 contacts substrate. E229 serves as the catalytic Nucleophile. Substrate-binding residues include N230 and G304. The active-site Proton donor is D305. An ABD region spans residues 344-506 (ASLTSGPALT…VSWVVSTGFA (163 aa)). Cysteines 409 and 447 form a disulfide. 8 residues coordinate substrate: H424, N426, F427, D443, H471, E473, L476, and D496.

This sequence belongs to the glycosyl hydrolase 54 family.

The protein localises to the secreted. It catalyses the reaction Hydrolysis of terminal non-reducing alpha-L-arabinofuranoside residues in alpha-L-arabinosides.. Its pathway is glycan metabolism; L-arabinan degradation. Alpha-L-arabinofuranosidase involved in the degradation of arabinoxylan, a major component of plant hemicellulose. Able to hydrolyze 1,5-, 1,3- and 1,2-alpha-linkages not only in L-arabinofuranosyl oligosaccharides, but also in polysaccharides containing terminal non-reducing L-arabinofuranoses in side chains, like L-arabinan, arabinogalactan and arabinoxylan. This chain is Probable alpha-L-arabinofuranosidase B (abfB), found in Aspergillus flavus (strain ATCC 200026 / FGSC A1120 / IAM 13836 / NRRL 3357 / JCM 12722 / SRRC 167).